Here is a 260-residue protein sequence, read N- to C-terminus: 14-3-3 protein 4 (260 aa).

Positions 238–260 are disordered; the sequence is DNADDVGDDIKEASKPESGEGQQ. The span at 245-260 shows a compositional bias: basic and acidic residues; that stretch reads DDIKEASKPESGEGQQ.

The protein belongs to the 14-3-3 family. In terms of assembly, homodimer.

This Solanum lycopersicum (Tomato) protein is 14-3-3 protein 4 (TFT4).